The chain runs to 254 residues: Low affinity immunoglobulin gamma Fc region receptor III-A (254 aa).

Residues 1-20 (MWHLLPPSALLLLISSVTKA) form the signal peptide. At 21-209 (ADPSKAVVLL…IAPLFPLWQQ (189 aa)) the chain is on the extracellular side. Ig-like C2-type domains follow at residues 23 to 104 (PSKA…VQLQ) and 121 to 174 (KGES…YYCR). Residues N42, N63, N166, and N181 are each glycosylated (N-linked (GlcNAc...) asparagine). 2 disulfide bridges follow: C47-C90 and C129-C173. Residues 210–230 (IAFCLMMGLLFAVDTGLYFFV) traverse the membrane as a helical segment. The Cytoplasmic portion of the chain corresponds to 231 to 254 (RRDLRRSMVHKEEYNFKWSQAQDK).

As to quaternary structure, forms a heterooligomeric complex with ITAM-containing signaling subunits FCER1G. Interacts (via transmembrane domain) with signaling subunits; this interaction is a prerequisite for receptor complex expression on the cell surface and intracellular signal transduction. Binds the Fc region of antigen-complexed IgG. In terms of processing, N-glycosylated. Post-translationally, phosphorylated following receptor ligation.

The protein resides in the cell membrane. Functionally, receptor for the invariable Fc fragment of immunoglobulin gamma (IgG). Binds with intermediate affinity to both IgG2a and IgG2b. Can bind to IgG2a and IgG2b monomers. Does not display binding to IgG1 or IgG3. Recognizes neutralizing virus-specific IgGs displayed on the cell surface of infected cells and triggers antibody-dependent cellular cytotoxicity (ADCC). Confers protection to lethal influenza virus infection. On splenic dendritic cells, uptakes antigen immune complexes and efficiently divert them into MHC class I and II antigen presentation pathways to provide for superior priming of CD4-positive and CD8-positive T cell immune responses. Mediates neutrophil activation by IgG complexes redundantly with FCGR2A. Plays a role in promoting bone resorption by enhancing osteoclast differentiation following binding to IgG2a. Also acts as a receptor for the Fc region of immunoglobulin epsilon (IgE). Binds with low affinity to both the a and b allotypes of IgE. Has also been shown to bind to IgE allotype a only but not to allotype b. Binds aggregated IgE but not the monomeric form and bound monomeric IgG is readily displaced by IgE complexes. Binding to IgE promotes macrophage-mediated phagocytosis, antigen presentation to T cells, production of pro-inflammatory cytokines and the late phase of cutaneous allergic reactions. Mediates enhanced ADCC in response to afucosylated IgGs. This is Low affinity immunoglobulin gamma Fc region receptor III-A from Cavia porcellus (Guinea pig).